Reading from the N-terminus, the 275-residue chain is Large ribosomal subunit protein uL2 (275 aa).

The interval 225 to 275 is disordered; it reads MNPVDHPHGGGEGRSPIGRPPVTPWGKPALGTRTRNKKKASSKLIVKRRTK. Positions 258 to 275 are enriched in basic residues; the sequence is TRNKKKASSKLIVKRRTK.

The protein belongs to the universal ribosomal protein uL2 family. As to quaternary structure, part of the 50S ribosomal subunit. Forms a bridge to the 30S subunit in the 70S ribosome.

One of the primary rRNA binding proteins. Required for association of the 30S and 50S subunits to form the 70S ribosome, for tRNA binding and peptide bond formation. It has been suggested to have peptidyltransferase activity; this is somewhat controversial. Makes several contacts with the 16S rRNA in the 70S ribosome. The sequence is that of Large ribosomal subunit protein uL2 from Desulforudis audaxviator (strain MP104C).